The primary structure comprises 147 residues: MTDRVKKTRKLRGHVSHGYGRVGKHRKHSGGRGLAGGFSHMKTFFTRFHPDYHGKRGMRVYHRKENSDYARPISSARLWGMIPKEQRYDFLDNPEKVPVIDVREFGYHVVVGGKLSLERPIVVKARYFTPSAKEEITKVGGKWIITY.

Positions 1–15 (MTDRVKKTRKLRGHV) are enriched in basic residues. Residues 1–34 (MTDRVKKTRKLRGHVSHGYGRVGKHRKHSGGRGL) are disordered.

It belongs to the universal ribosomal protein uL15 family.

The chain is Large ribosomal subunit protein uL15 (RPL27A) from Encephalitozoon cuniculi (strain GB-M1) (Microsporidian parasite).